Consider the following 390-residue polypeptide: Transcription factor bHLH76 (390 aa).

The segment at 147–217 (NVSEDSQSSG…SEKQPSDSLK (71 aa)) is disordered. Positions 207 to 217 (NSEKQPSDSLK) are enriched in basic and acidic residues. Residues 229-279 (QATNSHSLAERVRREKISERMKFLQDLVPGCDKVTGKAVMLDEIINYVQSL) enclose the bHLH domain.

In terms of assembly, homodimer. Interacts with IBH1. Binds reversibly to CRY2 after blue light illumination. As to expression, expressed constitutively in roots, leaves, stems, and flowers.

The protein resides in the nucleus. In terms of biological role, transcriptional activator involved in cell elongation. Regulates the expression of a subset of genes involved in cell expansion by binding to the G-box motif. Binds to chromatin DNA of the FT gene and promotes its expression, and thus triggers flowering in response to blue light. The protein is Transcription factor bHLH76 (BHLH76) of Arabidopsis thaliana (Mouse-ear cress).